Consider the following 212-residue polypeptide: Imidazole glycerol phosphate synthase subunit HisH (212 aa).

The Glutamine amidotransferase type-1 domain maps to 4-210 (NIGIIDYGMG…LKWLHEKNSD (207 aa)). Cys-82 (nucleophile) is an active-site residue. Catalysis depends on residues His-185 and Glu-187.

In terms of assembly, heterodimer of HisH and HisF.

It localises to the cytoplasm. It carries out the reaction 5-[(5-phospho-1-deoxy-D-ribulos-1-ylimino)methylamino]-1-(5-phospho-beta-D-ribosyl)imidazole-4-carboxamide + L-glutamine = D-erythro-1-(imidazol-4-yl)glycerol 3-phosphate + 5-amino-1-(5-phospho-beta-D-ribosyl)imidazole-4-carboxamide + L-glutamate + H(+). The catalysed reaction is L-glutamine + H2O = L-glutamate + NH4(+). It functions in the pathway amino-acid biosynthesis; L-histidine biosynthesis; L-histidine from 5-phospho-alpha-D-ribose 1-diphosphate: step 5/9. IGPS catalyzes the conversion of PRFAR and glutamine to IGP, AICAR and glutamate. The HisH subunit catalyzes the hydrolysis of glutamine to glutamate and ammonia as part of the synthesis of IGP and AICAR. The resulting ammonia molecule is channeled to the active site of HisF. The sequence is that of Imidazole glycerol phosphate synthase subunit HisH from Prochlorococcus marinus (strain MIT 9211).